A 474-amino-acid polypeptide reads, in one-letter code: Magnesium transporter MRS2-A, chloroplastic (474 aa).

The N-terminal 55 residues, 1–55 (MASVSSSPSYSSQAAVLLLLHQPPHQHGHGGACLRYRGSQSQGRGNAVATSLGLS), are a transit peptide targeting the chloroplast. Positions 79–129 (GKDGRAVTKDEEEEAAAAAVEEEGEVEVRREEDKPGDDGSREAAARGSGSG) are disordered. Acidic residues predominate over residues 88-103 (DEEEEAAAAAVEEEGE). A compositionally biased stretch (basic and acidic residues) spans 104–122 (VEVRREEDKPGDDGSREAA). Transmembrane regions (helical) follow at residues 412 to 432 (LLLQ…GIFG) and 444 to 464 (WAFW…FFIM). The Required for magnesium transport activity signature appears at 432-434 (GMN).

Belongs to the CorA metal ion transporter (MIT) (TC 1.A.35.5) family.

Its subcellular location is the plastid. The protein localises to the chloroplast membrane. Magnesium transporter that may mediate the influx of magnesium in chloroplast. The protein is Magnesium transporter MRS2-A, chloroplastic (MRS2-A) of Oryza sativa subsp. japonica (Rice).